A 684-amino-acid chain; its full sequence is Acetophenone carboxylase delta subunit (684 aa).

It belongs to the oxoprolinase family. In terms of assembly, acetophenone carboxylase consists of five subunits; a heterooctameric subcomplex of two alpha (Apc1), two beta (Apc2), two gamma (Apc3) and two delta (Apc4) subunits assembles with the epsilon (Apc5) subunit in an unknown stoichiometry. Mg(2+) is required as a cofactor. It depends on Mn(2+) as a cofactor.

Its subcellular location is the cytoplasm. The enzyme catalyses acetophenone + hydrogencarbonate + 2 ATP + H2O = 3-oxo-3-phenylpropanoate + 2 ADP + 2 phosphate + 2 H(+). Its activity is regulated as follows. Inhibited by zinc ions, carbamoylphosphate and beta,gamma-imido-ATP. In terms of biological role, catalyzes the carboxylation of acetophenone to form 3-oxo-3-phenylpropanoate (benzoylacetate) in the anaerobic catabolism of ethylbenzene. Also carboxylates propiophenone at the same rate and 4-acetyl-pyridine at lower rates. The sequence is that of Acetophenone carboxylase delta subunit (apc4) from Aromatoleum aromaticum (strain DSM 19018 / LMG 30748 / EbN1) (Azoarcus sp. (strain EbN1)).